The chain runs to 463 residues: Mitochondrial dynamics protein MID49 (463 aa).

Residues 1–24 (MAELQIRKKEKKSGDGIGTMVDFL) lie on the Mitochondrial intermembrane side of the membrane. A helical membrane pass occupies residues 25 to 47 (LANARLVLGVGGAAMLGIATLAV). The Cytoplasmic portion of the chain corresponds to 48 to 463 (KRLIDRATSP…EPDDVLKRER (416 aa)). The segment at 87 to 119 (TLRRKEDLEHHCAPLSLPDPSQKMPEATGTSQV) is disordered. Residues 89–98 (RRKEDLEHHC) show a composition bias toward basic and acidic residues.

This sequence belongs to the MID49/MID51 family.

It localises to the mitochondrion outer membrane. In terms of biological role, mitochondrial outer membrane protein which regulates mitochondrial organization. It is required for mitochondrial fission and promotes the recruitment and association of the fission mediator dynamin-related protein 1 (DNM1L) to the mitochondrial surface independently of the mitochondrial fission FIS1 and MFF proteins. Regulates DNM1L GTPase activity. This is Mitochondrial dynamics protein MID49 (mief2) from Xenopus laevis (African clawed frog).